Consider the following 179-residue polypeptide: UPF0227 protein VIBHAR_01524 (179 aa).

The protein belongs to the UPF0227 family.

The sequence is that of UPF0227 protein VIBHAR_01524 from Vibrio campbellii (strain ATCC BAA-1116).